The primary structure comprises 211 residues: Large ribosomal subunit protein uL3 (211 aa).

The residue at position 150 (Gln150) is an N5-methylglutamine.

This sequence belongs to the universal ribosomal protein uL3 family. In terms of assembly, part of the 50S ribosomal subunit. Forms a cluster with proteins L14 and L19. Post-translationally, methylated by PrmB.

Its function is as follows. One of the primary rRNA binding proteins, it binds directly near the 3'-end of the 23S rRNA, where it nucleates assembly of the 50S subunit. The protein is Large ribosomal subunit protein uL3 of Pseudomonas fluorescens (strain ATCC BAA-477 / NRRL B-23932 / Pf-5).